Here is a 256-residue protein sequence, read N- to C-terminus: NAD-dependent protein deacylase 2 (256 aa).

The region spanning 1–256 (MDSHSPIATV…MPQVVSHIYR (256 aa)) is the Deacetylase sirtuin-type domain. Residues 25–44 (GAGL…GGLY) and 108–111 (QNID) contribute to the NAD(+) site. Residue His128 is the Proton acceptor of the active site. Zn(2+) is bound by residues Cys136, Cys139, Cys158, and Cys161. Residues 199–201 (GTT), 225–227 (NPG), and Ala243 each bind NAD(+).

This sequence belongs to the sirtuin family. Class III subfamily. It depends on Zn(2+) as a cofactor.

It localises to the cytoplasm. The enzyme catalyses N(6)-acetyl-L-lysyl-[protein] + NAD(+) + H2O = 2''-O-acetyl-ADP-D-ribose + nicotinamide + L-lysyl-[protein]. In terms of biological role, NAD-dependent protein deacetylase which modulates the activities of several proteins which are inactive in their acetylated form. This chain is NAD-dependent protein deacylase 2 (cobB2), found in Pseudomonas aeruginosa (strain ATCC 15692 / DSM 22644 / CIP 104116 / JCM 14847 / LMG 12228 / 1C / PRS 101 / PAO1).